A 342-amino-acid polypeptide reads, in one-letter code: Phosphate acyltransferase (342 aa).

It belongs to the PlsX family. In terms of assembly, homodimer. Probably interacts with PlsY.

The protein resides in the cytoplasm. It catalyses the reaction a fatty acyl-[ACP] + phosphate = an acyl phosphate + holo-[ACP]. Its pathway is lipid metabolism; phospholipid metabolism. In terms of biological role, catalyzes the reversible formation of acyl-phosphate (acyl-PO(4)) from acyl-[acyl-carrier-protein] (acyl-ACP). This enzyme utilizes acyl-ACP as fatty acyl donor, but not acyl-CoA. This Shewanella halifaxensis (strain HAW-EB4) protein is Phosphate acyltransferase.